The chain runs to 289 residues: Putative transmembrane protein ORF111 (289 aa).

A run of 5 helical transmembrane segments spans residues 1–21, 112–132, 151–171, 189–209, and 261–281; these read MIGP…IFML, AIIT…VCIA, IGIT…FIVI, LNIS…TSIL, and YLLT…IGVG.

Its subcellular location is the host membrane. The chain is Putative transmembrane protein ORF111 from Ostreid herpesvirus 1 (isolate France) (OsHV-1).